The primary structure comprises 290 residues: Energy-coupling factor transporter ATP-binding protein EcfA2 (290 aa).

The ABC transporter domain maps to 6–246 (EKVEHVYNAR…ADKLAAIGLS (241 aa)). Residue 40–47 (GHTGSGKS) coordinates ATP.

The protein belongs to the ABC transporter superfamily. Energy-coupling factor EcfA family. Forms a stable energy-coupling factor (ECF) transporter complex composed of 2 membrane-embedded substrate-binding proteins (S component), 2 ATP-binding proteins (A component) and 2 transmembrane proteins (T component).

It localises to the cell membrane. Functionally, ATP-binding (A) component of a common energy-coupling factor (ECF) ABC-transporter complex. Unlike classic ABC transporters this ECF transporter provides the energy necessary to transport a number of different substrates. This is Energy-coupling factor transporter ATP-binding protein EcfA2 from Geobacillus kaustophilus (strain HTA426).